A 417-amino-acid chain; its full sequence is Serine hydroxymethyltransferase (417 aa).

Residues leucine 121 and 125–127 (GHL) contribute to the (6S)-5,6,7,8-tetrahydrofolate site. Lysine 229 carries the N6-(pyridoxal phosphate)lysine modification. Position 355-357 (355-357 (SPF)) interacts with (6S)-5,6,7,8-tetrahydrofolate.

The protein belongs to the SHMT family. As to quaternary structure, homodimer. It depends on pyridoxal 5'-phosphate as a cofactor.

It is found in the cytoplasm. It catalyses the reaction (6R)-5,10-methylene-5,6,7,8-tetrahydrofolate + glycine + H2O = (6S)-5,6,7,8-tetrahydrofolate + L-serine. The protein operates within one-carbon metabolism; tetrahydrofolate interconversion. It participates in amino-acid biosynthesis; glycine biosynthesis; glycine from L-serine: step 1/1. In terms of biological role, catalyzes the reversible interconversion of serine and glycine with tetrahydrofolate (THF) serving as the one-carbon carrier. This reaction serves as the major source of one-carbon groups required for the biosynthesis of purines, thymidylate, methionine, and other important biomolecules. Also exhibits THF-independent aldolase activity toward beta-hydroxyamino acids, producing glycine and aldehydes, via a retro-aldol mechanism. This chain is Serine hydroxymethyltransferase, found in Tolumonas auensis (strain DSM 9187 / NBRC 110442 / TA 4).